A 374-amino-acid polypeptide reads, in one-letter code: Carbamoyl phosphate synthase small chain (374 aa).

The tract at residues 1–185 (MKAILALEDG…DVSSGYKWSD (185 aa)) is CPSase. L-glutamine is bound by residues Ser-45, Gly-237, and Gly-239. The Glutamine amidotransferase type-1 domain maps to 189 to 374 (RLVLVDYGVK…RNLVKDATGK (186 aa)). Residue Cys-264 is the Nucleophile of the active site. The L-glutamine site is built by Leu-265, Gln-268, Asn-306, Gly-308, and Phe-309. Residues His-347 and Glu-349 contribute to the active site.

It belongs to the CarA family. Composed of two chains; the small (or glutamine) chain promotes the hydrolysis of glutamine to ammonia, which is used by the large (or ammonia) chain to synthesize carbamoyl phosphate. Tetramer of heterodimers (alpha,beta)4.

The enzyme catalyses hydrogencarbonate + L-glutamine + 2 ATP + H2O = carbamoyl phosphate + L-glutamate + 2 ADP + phosphate + 2 H(+). It catalyses the reaction L-glutamine + H2O = L-glutamate + NH4(+). It functions in the pathway amino-acid biosynthesis; L-arginine biosynthesis; carbamoyl phosphate from bicarbonate: step 1/1. It participates in pyrimidine metabolism; UMP biosynthesis via de novo pathway; (S)-dihydroorotate from bicarbonate: step 1/3. In terms of biological role, small subunit of the glutamine-dependent carbamoyl phosphate synthetase (CPSase). CPSase catalyzes the formation of carbamoyl phosphate from the ammonia moiety of glutamine, carbonate, and phosphate donated by ATP, constituting the first step of 2 biosynthetic pathways, one leading to arginine and/or urea and the other to pyrimidine nucleotides. The small subunit (glutamine amidotransferase) binds and cleaves glutamine to supply the large subunit with the substrate ammonia. In Maridesulfovibrio salexigens (strain ATCC 14822 / DSM 2638 / NCIMB 8403 / VKM B-1763) (Desulfovibrio salexigens), this protein is Carbamoyl phosphate synthase small chain.